A 732-amino-acid chain; its full sequence is TIR domain-containing adapter molecule 1 (732 aa).

A TRIF-NTD region spans residues methionine 1–serine 153. The TRAF6-binding signature appears at glutamate 84–aspartate 91. The tract at residues cysteine 144 to histidine 191 is disordered. The span at histidine 159–glutamine 178 shows a compositional bias: polar residues. The pLxIS motif motif lies at leucine 206–serine 209. Serine 209 is subject to Phosphoserine. A Glycyl lysine isopeptide (Lys-Gly) (interchain with G-Cter in ubiquitin) cross-link involves residue lysine 228. 2 consecutive short sequence motifs (TRAF6-binding) follow at residues glutamine 247–tryptophan 254 and histidine 296–threonine 306. Residues serine 305–proline 331 show a composition bias toward polar residues. The disordered stretch occupies residues serine 305–serine 389. Residues serine 345–proline 359 are compositionally biased toward low complexity. Residues lysine 395–lysine 534 enclose the TIR domain. Residues tryptophan 514–glutamate 713 are sufficient to induce apoptosis. Disordered regions lie at residues threonine 603 to proline 679 and methionine 696 to glutamate 732. 2 stretches are compositionally biased toward pro residues: residues proline 604–serine 615 and proline 625–serine 657. Residues serine 658–alanine 671 show a composition bias toward low complexity.

Homodimer. Found in a multi-helicase-TICAM1 complex at least composed of DHX36, DDX1, DDX21 and TICAM1; this complex exists in resting cells with or without poly(I:C) RNA ligand stimulation. Interacts (via TIR domain) with DDX21 (via C-terminus). Interacts (via TIR domain) with DHX36 (via C-terminus). Interacts with AZI2 and IRF7. Interacts (when phosphorylated) with IRF3; following activation and phosphorylation on the pLxIS motif by TBK1, recruits IRF3. Interacts with TICAM2 in TLR4 recruitment. Interaction with PIAS4 inhibits the TICAM1-induced NF-kappa-B, IRF and IFNB1 activation. Interacts with IKBKB and IKBKE. Interaction with SARM1 blocks TICAM1-dependent transcription factor activation. Interacts with TRAF3. Interacts with TRAFD1. Interacts with UBQLN1 (via UBA domain). Interacts with TBK1, TRAF6 and RIPK1 and these interactions are enhanced in the presence of WDFY1. Interacts (via the TIR domain) with TLR3 in response to poly(I:C) and this interaction is enhanced in the presence of WDFY1. Interacts with TLR4 in response to poly(I:C) in a WDFY1-dependent manner. Interacts with WDFY1 in response to poly(I:C). Interacts with TRIM56. Interacts (via the TIR domain) with TLR5. Interacts with TRIM8. Interacts with TAX1BP1 and TRIM32; these interactions target TICAM1 to TAX1BP1-mediated selective autophagic degradation. Interacts with DDX50. Post-translationally, phosphorylated by TBK1. Following activation, phosphorylated by TBK1 at Ser-209 in the pLxIS motif. The phosphorylated pLxIS motif constitutes an IRF3-binding motif, leading to recruitment of the transcription factor IRF3 to induce type-I interferons and other cytokines. Polyubiquitinated at Lys-228 by TRIM38 with 'Lys-48'-linked chains, leading to proteasomal degradation. Polyubiquitinated with 'Lys-6'- and 'Lys-33'-linked chains in a TRIM8-dependent manner; ubiquitination disrupts the interaction with TBK1 and subsequent interferon production.

It is found in the cytoplasm. The protein resides in the cytosol. The protein localises to the cytoplasmic vesicle. It localises to the autophagosome. Its subcellular location is the mitochondrion. Involved in innate immunity against invading pathogens. Adapter used by TLR3, TLR4 (through TICAM2) and TLR5 to mediate NF-kappa-B and interferon-regulatory factor (IRF) activation, and to induce apoptosis. Ligand binding to these receptors results in TRIF recruitment through its TIR domain. Distinct protein-interaction motifs allow recruitment of the effector proteins TBK1, TRAF6 and RIPK1, which in turn, lead to the activation of transcription factors IRF3 and IRF7, NF-kappa-B and FADD respectively. Phosphorylation by TBK1 on the pLxIS motif leads to recruitment and subsequent activation of the transcription factor IRF3 to induce expression of type I interferon and exert a potent immunity against invading pathogens. Component of a multi-helicase-TICAM1 complex that acts as a cytoplasmic sensor of viral double-stranded RNA (dsRNA) and plays a role in the activation of a cascade of antiviral responses including the induction of pro-inflammatory cytokines. The chain is TIR domain-containing adapter molecule 1 (Ticam1) from Mus musculus (Mouse).